Consider the following 208-residue polypeptide: Translation initiation factor 6 (208 aa).

Belongs to the eIF-6 family.

Functionally, binds to the 50S ribosomal subunit and prevents its association with the 30S ribosomal subunit to form the 70S initiation complex. This is Translation initiation factor 6 (eif6) from Nanoarchaeum equitans (strain Kin4-M).